A 547-amino-acid polypeptide reads, in one-letter code: uncharacterized protein (547 aa).

A compositionally biased stretch (polar residues) spans 1–18 (MEYHPSSQSPQVNPGMES). 2 disordered regions span residues 1–41 (MEYH…LQHP) and 80–165 (PSYP…VKRQ). Low complexity-rich tracts occupy residues 19–29 (QQGGYTYTYQQ) and 83–94 (PQSSSAPSNNSY). Residues 121 to 135 (VPSPSPIEMVPPSPP) are compositionally biased toward pro residues. Over residues 136 to 160 (KTGSNNSAPVTGKTVQSGNALNNSG) the composition is skewed to polar residues. Residues 174-201 (CLTCRKRRIKCDERKPICYNCIKSKRQC) constitute a DNA-binding region (zn(2)-C6 fungal-type).

It localises to the nucleus. This is an uncharacterized protein from Schizosaccharomyces pombe (strain 972 / ATCC 24843) (Fission yeast).